A 410-amino-acid chain; its full sequence is Cytochrome P450(BM-1) (410 aa).

Residue Cys-356 participates in heme binding.

This sequence belongs to the cytochrome P450 family. Heme serves as cofactor.

Its subcellular location is the cytoplasm. Its function is as follows. Cytochromes P450 are a group of heme-thiolate monooxygenases. They oxidize a variety of structurally unrelated compounds, including steroids, fatty acids, and xenobiotics. This is Cytochrome P450(BM-1) (cyp106) from Priestia megaterium (strain ATCC 14581 / DSM 32 / CCUG 1817 / JCM 2506 / NBRC 15308 / NCIMB 9376 / NCTC 10342 / NRRL B-14308 / VKM B-512 / Ford 19) (Bacillus megaterium).